We begin with the raw amino-acid sequence, 447 residues long: Argininosuccinate synthase (447 aa).

Residues 20-28 and A46 contribute to the ATP site; that span reads AFSGGLDTS. Y102 contributes to the L-citrulline binding site. ATP is bound by residues G132 and T134. The L-aspartate site is built by T134, N138, and D139. N138 serves as a coordination point for L-citrulline. An ATP-binding site is contributed by D139. R142 and S195 together coordinate L-citrulline. D197 provides a ligand contact to ATP. L-citrulline-binding residues include T204, E206, and E283.

It belongs to the argininosuccinate synthase family. Type 2 subfamily. Homotetramer.

The protein resides in the cytoplasm. The catalysed reaction is L-citrulline + L-aspartate + ATP = 2-(N(omega)-L-arginino)succinate + AMP + diphosphate + H(+). It participates in amino-acid biosynthesis; L-arginine biosynthesis; L-arginine from L-ornithine and carbamoyl phosphate: step 2/3. The sequence is that of Argininosuccinate synthase (argG) from Neisseria meningitidis serogroup B (strain ATCC BAA-335 / MC58).